Here is a 420-residue protein sequence, read N- to C-terminus: Interleukin-5 receptor subunit alpha (420 aa).

Residues 1-20 (MIIVAHVLLILLGATEILQA) form the signal peptide. The Extracellular segment spans residues 21–342 (DLLPDEKISL…NDEHKPLREW (322 aa)). The region spanning 32–123 (PPVNFTIKVT…ASAELHAPPG (92 aa)) is the Fibronectin type-III 1 domain. 2 N-linked (GlcNAc...) asparagine glycosylation sites follow: Asn35 and Asn131. Disulfide bonds link Cys134–Cys155 and Cys182–Cys196. Asn216 and Asn244 each carry an N-linked (GlcNAc...) asparagine glycan. A Fibronectin type-III 2 domain is found at 241-334 (PPLNVTAEIE…WSQPIYVGND (94 aa)). Cys269 and Cys316 form a disulfide bridge. The WSXWS motif motif lies at 322 to 326 (WSEWS). A helical membrane pass occupies residues 343–362 (FVIVIMATICFILLILSLIC). Topologically, residues 363–420 (KICHLWIKLFPPIPAPKSNIKDLFVTTNYEKAGSSETEIEVICYIEKPGVETLEDSVF) are cytoplasmic. The Box 1 motif signature appears at 371–379 (LFPPIPAPK).

Belongs to the type I cytokine receptor family. Type 5 subfamily. As to quaternary structure, interacts with IL5. Interacts with CSF2RB. Interacts with JAK2. Interacts with SDCBP. As to expression, expressed on eosinophils and basophils.

The protein localises to the membrane. Cell surface receptor that plays an important role in the survival, differentiation, and chemotaxis of eosinophils. Acts by forming a heterodimeric receptor with CSF2RB subunit and subsequently binding to interleukin-5. In unstimulated conditions, interacts constitutively with JAK2. Heterodimeric receptor activation leads to JAK2 stimulation and subsequent activation of the JAK-STAT pathway. The sequence is that of Interleukin-5 receptor subunit alpha (IL5RA) from Homo sapiens (Human).